A 184-amino-acid polypeptide reads, in one-letter code: Putative F-box protein At4g22420 (184 aa).

The region spanning 1-46 (MAECPTDLINEMFLRLRATTLKKCRVLSKPCFSLIDSPEKRVIERS) is the F-box domain. The tract at residues 68-126 (DDDEEEGNELKKSQARRNGVAKGEGNGNKVNGEAQEEVDDEEDDDDDASKGRGKHSRHV) is disordered. The segment covering 85-100 (NGVAKGEGNGNKVNGE) has biased composition (low complexity). Acidic residues predominate over residues 101-114 (AQEEVDDEEDDDDD).

This chain is Putative F-box protein At4g22420, found in Arabidopsis thaliana (Mouse-ear cress).